A 254-amino-acid chain; its full sequence is Putative electron transfer flavoprotein subunit YdiQ (254 aa).

This sequence belongs to the ETF beta-subunit/FixA family. YdiR and YdiQ form a heterodimer.

Functionally, may play a role in a redox process. The chain is Putative electron transfer flavoprotein subunit YdiQ (ydiQ) from Escherichia coli (strain K12).